The following is a 40-amino-acid chain: Mu-thomitoxin-Hme1b (40 aa).

3 disulfide bridges follow: Cys-2–Cys-18, Cys-9–Cys-22, and Cys-17–Cys-33.

Belongs to the neurotoxin 19 (CSTX) family. Contains 3 disulfide bonds. In terms of tissue distribution, expressed by the venom gland.

The protein localises to the secreted. Blocks the Nav1.2/SCN2A, Nav1.4/SCN4A, Nav1.5/SCN5A and Nav1.6/SCN8A sodium channels. Shows a slight preference for the Nav1.2 and Nav1.4 channels. Reduces the peak amplitude of the sodium current and negatively shifts the steady-state inactivation process. Does not shift the threshold potential of activation or the voltage corresponding to maximal current. Does not change the reversal potential of the sodium current. May act on site 1 of the receptor. The sequence is that of Mu-thomitoxin-Hme1b from Heriaeus mellotteei (Crab spider).